The primary structure comprises 440 residues: Ribosomal protein uS12 methylthiotransferase RimO (440 aa).

Positions Pro6–Pro116 constitute an MTTase N-terminal domain. [4Fe-4S] cluster is bound by residues Cys15, Cys51, Cys80, Cys149, Cys153, and Cys156. Residues Leu135–Ala373 form the Radical SAM core domain. The TRAM domain occupies Gln376 to Val440.

It belongs to the methylthiotransferase family. RimO subfamily. It depends on [4Fe-4S] cluster as a cofactor.

The protein resides in the cytoplasm. It catalyses the reaction L-aspartate(89)-[ribosomal protein uS12]-hydrogen + (sulfur carrier)-SH + AH2 + 2 S-adenosyl-L-methionine = 3-methylsulfanyl-L-aspartate(89)-[ribosomal protein uS12]-hydrogen + (sulfur carrier)-H + 5'-deoxyadenosine + L-methionine + A + S-adenosyl-L-homocysteine + 2 H(+). Functionally, catalyzes the methylthiolation of an aspartic acid residue of ribosomal protein uS12. The sequence is that of Ribosomal protein uS12 methylthiotransferase RimO from Pseudomonas paraeruginosa (strain DSM 24068 / PA7) (Pseudomonas aeruginosa (strain PA7)).